Reading from the N-terminus, the 775-residue chain is Glutamine--tRNA ligase (775 aa).

Alanine 2 carries the post-translational modification N-acetylalanine. Serine 70 bears the Phosphoserine mark. ATP-binding positions include 271-273 (EPN) and 277-283 (HIGHAKA). L-glutamine is bound at residue aspartate 303. The residue at position 309 (lysine 309) is an N6-acetyllysine. Position 438 (tyrosine 438) interacts with L-glutamine. ATP is bound by residues threonine 457, 486 to 487 (RL), and 494 to 496 (VSK). Serine 495 is modified (phosphoserine).

The protein belongs to the class-I aminoacyl-tRNA synthetase family. In terms of assembly, monomer. Part of a multisubunit complex that groups tRNA ligases for Arg (RARS1), Asp (DARS1), Gln (QARS1), Ile (IARS1), Leu (LARS1), Lys (KARS1), Met (MARS1) the bifunctional ligase for Glu and Pro (EPRS1) and the auxiliary subunits AIMP1/p43, AIMP2/p38 and EEF1E1/p18. Interacts with RARS1. Part of a complex composed of RARS1, QARS1 and AIMP1. In terms of tissue distribution, detected in dorsal root ganglia (at protein level). Detected in dorsal root ganglia.

Its subcellular location is the cytoplasm. It localises to the cytosol. The catalysed reaction is tRNA(Gln) + L-glutamine + ATP = L-glutaminyl-tRNA(Gln) + AMP + diphosphate. Its function is as follows. Glutamine--tRNA ligase. Plays a critical role in brain development. This chain is Glutamine--tRNA ligase (Qars1), found in Rattus norvegicus (Rat).